The primary structure comprises 330 residues: Trans-1,2-dihydrobenzene-1,2-diol dehydrogenase (330 aa).

The protein belongs to the Gfo/Idh/MocA family. As to quaternary structure, homodimer.

The catalysed reaction is (1R,2R)-1,2-dihydrobenzene-1,2-diol + NADP(+) = catechol + NADPH + H(+). The enzyme catalyses D-xylose + NADP(+) = D-xylono-1,5-lactone + NADPH + H(+). This is Trans-1,2-dihydrobenzene-1,2-diol dehydrogenase (dhdh) from Xenopus laevis (African clawed frog).